The following is a 282-amino-acid chain: Acetylglutamate kinase (282 aa).

Residues 62-63 (GG), arginine 84, and asparagine 178 contribute to the substrate site.

It belongs to the acetylglutamate kinase family. ArgB subfamily.

The protein resides in the cytoplasm. It carries out the reaction N-acetyl-L-glutamate + ATP = N-acetyl-L-glutamyl 5-phosphate + ADP. Its pathway is amino-acid biosynthesis; L-arginine biosynthesis; N(2)-acetyl-L-ornithine from L-glutamate: step 2/4. Its function is as follows. Catalyzes the ATP-dependent phosphorylation of N-acetyl-L-glutamate. In Thermotoga neapolitana (strain ATCC 49049 / DSM 4359 / NBRC 107923 / NS-E), this protein is Acetylglutamate kinase.